A 115-amino-acid polypeptide reads, in one-letter code: Large ribosomal subunit protein bL19 (115 aa).

Belongs to the bacterial ribosomal protein bL19 family.

Functionally, this protein is located at the 30S-50S ribosomal subunit interface and may play a role in the structure and function of the aminoacyl-tRNA binding site. This Clostridium kluyveri (strain ATCC 8527 / DSM 555 / NBRC 12016 / NCIMB 10680 / K1) protein is Large ribosomal subunit protein bL19.